The sequence spans 232 residues: Ubiquitin carboxyl-terminal hydrolase UCHL3 (232 aa).

The region spanning 6–225 is the UCH catalytic domain; it reads IWTPLESNPD…LRFSALAVIP (220 aa). The interaction with ubiquitin stretch occupies residues 10 to 14; that stretch reads LESNP. Cysteine 92 functions as the Nucleophile in the catalytic mechanism. Positions 151–159 are crossover loop which restricts access of large ubiquitin adducts to the active site; that stretch reads QVENRDDIL. The interaction with ubiquitin stretch occupies residues 163 to 165; it reads THF. Residue histidine 164 is the Proton donor of the active site.

It belongs to the peptidase C12 family.

It catalyses the reaction Thiol-dependent hydrolysis of ester, thioester, amide, peptide and isopeptide bonds formed by the C-terminal Gly of ubiquitin (a 76-residue protein attached to proteins as an intracellular targeting signal).. Functionally, thiol protease that recognizes and hydrolyzes a peptide bond at the C-terminal glycine of either ubiquitin or NEDD8. Essential for parasite blood stage survival. The chain is Ubiquitin carboxyl-terminal hydrolase UCHL3 from Plasmodium falciparum (isolate 3D7).